Here is a 750-residue protein sequence, read N- to C-terminus: Nibrin (750 aa).

Positions 24-83 constitute an FHA domain; sequence YIVGRKNCAILIENDQSISRNHAVLRVNFPVTSLSQTDEIPTLTIKDNSKYGTFINEEKM. BRCT domains follow at residues 105–181 and 224–315; these read KFRV…SEFL and GKTF…LAVI. The mediates interaction with SP100 stretch occupies residues 111 to 328; it reads EPLVVCSSCL…TESYCNPQGQ (218 aa). The interaction with MTOR, MAPKAP1 and RICTOR stretch occupies residues 221–403; that stretch reads IFKGKTFVFL…SRKLLQGTCN (183 aa). The residue at position 337 (Thr-337) is a Phosphothreonine. Ser-343 carries the phosphoserine; by ATM modification. Phosphoserine occurs at positions 347 and 433. Disordered stretches follow at residues 429 to 479 and 494 to 550; these read NYQL…SSCK and QPAG…RKRK. Residue Lys-436 forms a Glycyl lysine isopeptide (Lys-Gly) (interchain with G-Cter in ubiquitin) linkage. Polar residues predominate over residues 446-457; that stretch reads WSSQQQLNSIKN. Positions 461–467 match the Nuclear localization signal motif; the sequence is PCSRKRE. A compositionally biased stretch (basic and acidic residues) spans 502 to 514; sequence KSKDHESQSETLD. Ser-508 and Ser-517 each carry phosphoserine. A Glycyl lysine isopeptide (Lys-Gly) (interchain with G-Cter in SUMO2) cross-link involves residue Lys-528. Residues 540–550 show a composition bias toward basic and acidic residues; that stretch reads STEDLRARKRK. Residues Lys-569 and Lys-580 each participate in a glycyl lysine isopeptide (Lys-Gly) (interchain with G-Cter in SUMO2) cross-link. Residues 581-599 are compositionally biased toward basic and acidic residues; it reads QEADVSIRKKPRMDAERNQ. The disordered stretch occupies residues 581-622; that stretch reads QEADVSIRKKPRMDAERNQHLNGGPVPESNSALQEDETGKKD. Glycyl lysine isopeptide (Lys-Gly) (interchain with G-Cter in ubiquitin) cross-links involve residues Lys-683, Lys-687, and Lys-732. Residues 737 to 746 carry the FxF/Y motif motif; the sequence is ADDLFRYNPN.

It belongs to the Nibrin family. As to quaternary structure, component of the MRN complex composed of two heterodimers RAD50 and MRE11 associated with a single NBN. The MRN complexes dimerize on DNA to form joined MRN-MRN oligomers required for DNA double-strand break repair. The MRN complexes dimerize on DNA to form joined MRN-MRN oligomers required for DNA double-strand break repair. As part of the MRN complex, interacts with MCM9; the interaction recruits the complex to DNA repair sites. Component of the BASC complex, at least composed of BRCA1, MSH2, MSH6, MLH1, ATM, BLM, RAD50, MRE11 and NBN. Interacts with histone H2AX; this requires phosphorylation of H2AX on 'Ser-139' and promotes NBN recruitment to DNA damage sites. Interacts with (phosphorylated) MDC1; promoting NBN recruitment to DNA damage sites. Interacts with (phosphorylated) RAD17; promoting NBN recruitment to DNA damage sites. Interacts (via FxF/Y motif) with ATM. Interacts with HJURP. Interacts with INTS3. Interacts with KPNA2. Interacts with TERF2; interaction is disrupted upon NBN phosphorylation by CDK2. Interacts with (phosphorylated) RBBP8/CtIP; the interaction links the role of the MRN complex in DNA double-strand break sensing to resection. Interacts with SP100; recruits NBN to PML bodies. Interacts with ATF2. Interacts with MTOR, MAPKAP1 isoform 2 and RICTOR; indicative for an association with the mTORC2 complex. Interacts with MRNIP. Interacts with UFL1; promoting UFL1 recruitment to double-strand breaks following DNA damage. Interacts with CYREN (via XLF motif). In terms of processing, phosphorylated by ATM in response of ionizing radiation, and such phosphorylation is responsible intra-S phase checkpoint control and telomere maintenance. Phosphorylated at Ser-433 by CDK2 in S/G2 phases abolishes interaction with TERF2, enabling DCLRE1B/Apollo recruitment to telomeres. Phosphorylation at Ser-433 in response to dysfunctional telomeres promotes non-homologous end joining repair at telomeres, while dephosphorylation by PPP1CA promotes microhomology-mediated end-joining (MMEJ) repair. Post-translationally, ubiquitinated at Lys-436 via 'Lys-6'-linked ubiquitin chains by RNF8, promoting NBN recruitment to DNA double-strand breaks (DSBs). Ubiquitinated at Lys-687 via 'Lys-63'-linked ubiquitin chains by PELI1: ubiquitination takes place following PELI1 phosphorylation and promotes ATM activation and DNA repair. Ubiquitinated at Lys-732 via 'Lys-63'-linked ubiquitin chains by the SCF(SKP2) complex: ubiquitination takes place following SKP2 phosphorylation and promotes ATM activation and DNA repair. Present at approximately equal levels in the heart at fetal day 17, at relatively constant levels at postnatal days 10, 17 and 21 and at slightly lower levels in the adult heart. Barely detectable in the brain. Not detected in kidney, very low levels in liver and skeletal muscle and moderate levels in heart, lung and brain (at protein level).

It is found in the nucleus. Its subcellular location is the chromosome. The protein localises to the PML body. It localises to the telomere. Functionally, component of the MRN complex, which plays a central role in double-strand break (DSB) repair, DNA recombination, maintenance of telomere integrity and meiosis. The MRN complex is involved in the repair of DNA double-strand breaks (DSBs) via homologous recombination (HR), an error-free mechanism which primarily occurs during S and G2 phases. The complex (1) mediates the end resection of damaged DNA, which generates proper single-stranded DNA, a key initial steps in HR, and is (2) required for the recruitment of other repair factors and efficient activation of ATM and ATR upon DNA damage. The MRN complex possesses single-strand endonuclease activity and double-strand-specific 3'-5' exonuclease activity, which are provided by MRE11, to initiate end resection, which is required for single-strand invasion and recombination. Within the MRN complex, NBN acts as a protein-protein adapter, which specifically recognizes and binds phosphorylated proteins, promoting their recruitment to DNA damage sites. Recruits MRE11 and RAD50 components of the MRN complex to DSBs in response to DNA damage. Promotes the recruitment of PI3/PI4-kinase family members ATM, ATR, and probably DNA-PKcs to the DNA damage sites, activating their functions. Mediates the recruitment of phosphorylated RBBP8/CtIP to DSBs, leading to cooperation between the MRN complex and RBBP8/CtIP to initiate end resection. RBBP8/CtIP specifically promotes the endonuclease activity of the MRN complex to clear DNA ends containing protein adducts. The MRN complex is also required for the processing of R-loops. NBN also functions in telomere length maintenance via its interaction with TERF2: interaction with TERF2 during G1 phase preventing recruitment of DCLRE1B/Apollo to telomeres. NBN also promotes DNA repair choice at dysfunctional telomeres: NBN phosphorylation by CK2 promotes non-homologous end joining repair at telomeres, while unphosphorylated NBN promotes microhomology-mediated end-joining (MMEJ) repair. Enhances AKT1 phosphorylation possibly by association with the mTORC2 complex. This is Nibrin (Nbn) from Rattus norvegicus (Rat).